The primary structure comprises 380 residues: Tryptophan 2,3-dioxygenase (380 aa).

Substrate-binding positions include 57-61 (FIITH) and R128. Position 313 (H313) interacts with heme. T328 contributes to the substrate binding site.

This sequence belongs to the tryptophan 2,3-dioxygenase family. In terms of assembly, homotetramer. Dimer of dimers. It depends on heme as a cofactor.

It catalyses the reaction L-tryptophan + O2 = N-formyl-L-kynurenine. The protein operates within amino-acid degradation; L-tryptophan degradation via kynurenine pathway; L-kynurenine from L-tryptophan: step 1/2. It participates in pigment biosynthesis; ommochrome biosynthesis. Functionally, heme-dependent dioxygenase that catalyzes the oxidative cleavage of the L-tryptophan (L-Trp) pyrrole ring and converts L-tryptophan to N-formyl-L-kynurenine. Catalyzes the oxidative cleavage of the indole moiety. This chain is Tryptophan 2,3-dioxygenase, found in Drosophila ananassae (Fruit fly).